The primary structure comprises 107 residues: U1-lycotoxin-Ls1b (107 aa).

The first 20 residues, 1–20, serve as a signal peptide directing secretion; it reads MMKVLVVVALLVTLISYSSS. The propeptide occupies 21–41; sequence EGIDDLEADELLSLMADEQTR. 4 disulfide bridges follow: C44–C59, C51–C68, C58–C86, and C70–C84.

The protein belongs to the neurotoxin 19 (CSTX) family. 04 (U1-Lctx) subfamily. As to expression, expressed by the venom gland.

It is found in the secreted. The sequence is that of U1-lycotoxin-Ls1b from Lycosa singoriensis (Wolf spider).